The chain runs to 509 residues: Zinc finger CCCH-type with G patch domain-containing protein (509 aa).

The segment at 155–178 (PCNYYLEGECRFDEIRCRYSHGAL) adopts a C3H1-type zinc-finger fold. Residues 254–277 (EDELTSEDSSSSPHDESSDEIDSD) form a disordered region. One can recognise a G-patch domain in the interval 310–356 (TRGIGSKLMEKMGYIHGTGLGSEGRGIVTPVSAQILPQGRSLDACME). A disordered region spans residues 407 to 430 (LGGGESRHQGDQAAKKAKTNDLQQ). Residues 411–420 (ESRHQGDQAA) are compositionally biased toward basic and acidic residues.

Its subcellular location is the nucleus. Functionally, transcription repressor. The polypeptide is Zinc finger CCCH-type with G patch domain-containing protein (Drosophila pseudoobscura pseudoobscura (Fruit fly)).